The chain runs to 199 residues: Imidazole glycerol phosphate synthase subunit HisH (199 aa).

Residues 1 to 199 (MTVVVDYEMG…QILKNLREML (199 aa)) enclose the Glutamine amidotransferase type-1 domain. Cysteine 79 acts as the Nucleophile in catalysis. Catalysis depends on residues histidine 180 and glutamate 182.

In terms of assembly, heterodimer of HisH and HisF.

The protein resides in the cytoplasm. The enzyme catalyses 5-[(5-phospho-1-deoxy-D-ribulos-1-ylimino)methylamino]-1-(5-phospho-beta-D-ribosyl)imidazole-4-carboxamide + L-glutamine = D-erythro-1-(imidazol-4-yl)glycerol 3-phosphate + 5-amino-1-(5-phospho-beta-D-ribosyl)imidazole-4-carboxamide + L-glutamate + H(+). The catalysed reaction is L-glutamine + H2O = L-glutamate + NH4(+). It functions in the pathway amino-acid biosynthesis; L-histidine biosynthesis; L-histidine from 5-phospho-alpha-D-ribose 1-diphosphate: step 5/9. In terms of biological role, IGPS catalyzes the conversion of PRFAR and glutamine to IGP, AICAR and glutamate. The HisH subunit catalyzes the hydrolysis of glutamine to glutamate and ammonia as part of the synthesis of IGP and AICAR. The resulting ammonia molecule is channeled to the active site of HisF. The sequence is that of Imidazole glycerol phosphate synthase subunit HisH from Carboxydothermus hydrogenoformans (strain ATCC BAA-161 / DSM 6008 / Z-2901).